Here is a 55-residue protein sequence, read N- to C-terminus: Large ribosomal subunit protein eL40 (55 aa).

It belongs to the eukaryotic ribosomal protein eL40 family.

In Ignicoccus hospitalis (strain KIN4/I / DSM 18386 / JCM 14125), this protein is Large ribosomal subunit protein eL40.